A 220-amino-acid chain; its full sequence is Guanylate kinase (220 aa).

The Guanylate kinase-like domain maps to 15 to 194 (GLMLVISSPS…AFEGIEAIVK (180 aa)). Residue 22 to 29 (SPSGAGKS) participates in ATP binding.

This sequence belongs to the guanylate kinase family.

Its subcellular location is the cytoplasm. It catalyses the reaction GMP + ATP = GDP + ADP. Its function is as follows. Essential for recycling GMP and indirectly, cGMP. This is Guanylate kinase from Agrobacterium fabrum (strain C58 / ATCC 33970) (Agrobacterium tumefaciens (strain C58)).